Here is a 344-residue protein sequence, read N- to C-terminus: MPDRELISGDRQAEDAQFEVGLRPRRLADFTGQSKLKENLSIAIEAARMRGEAMDHVLLYGPPGLGKTTLASIIAEELQVQFTPTSGPVLQKKLDLTGILSNIRLHQVFFIDEIHRLLPDVEEMLYSALEDFRVDILVGVGPGARTHSLPMPKFTAIGATTRQGLVSAPLRGRFGLVLRLDPYNTEELKAIVKRSARLLTVEIEDGAAEEIARRCRGTPRIANRLLRRVRDYAQVRADGRINQKVAQTALNLLDVDRYGLDEIDQKIMMTILEKYRGGPVGVNTIAASISEESETIEEVYEPYLIQLGFLNRTPRGRVATELAYDYFKVKRKLREGDHPSLFEA.

A large ATPase domain (RuvB-L) region spans residues 1-183; it reads MPDRELISGD…FGLVLRLDPY (183 aa). ATP-binding positions include Leu-22, Arg-23, Gly-64, Lys-67, Thr-68, Thr-69, 130–132, Arg-173, Tyr-183, and Arg-220; that span reads EDF. Position 68 (Thr-68) interacts with Mg(2+). Positions 184–254 are small ATPAse domain (RuvB-S); sequence NTEELKAIVK…VAQTALNLLD (71 aa). Positions 257–344 are head domain (RuvB-H); the sequence is RYGLDEIDQK…EGDHPSLFEA (88 aa). DNA-binding residues include Arg-312 and Arg-317.

It belongs to the RuvB family. In terms of assembly, homohexamer. Forms an RuvA(8)-RuvB(12)-Holliday junction (HJ) complex. HJ DNA is sandwiched between 2 RuvA tetramers; dsDNA enters through RuvA and exits via RuvB. An RuvB hexamer assembles on each DNA strand where it exits the tetramer. Each RuvB hexamer is contacted by two RuvA subunits (via domain III) on 2 adjacent RuvB subunits; this complex drives branch migration. In the full resolvosome a probable DNA-RuvA(4)-RuvB(12)-RuvC(2) complex forms which resolves the HJ.

The protein resides in the cytoplasm. It catalyses the reaction ATP + H2O = ADP + phosphate + H(+). Its function is as follows. The RuvA-RuvB-RuvC complex processes Holliday junction (HJ) DNA during genetic recombination and DNA repair, while the RuvA-RuvB complex plays an important role in the rescue of blocked DNA replication forks via replication fork reversal (RFR). RuvA specifically binds to HJ cruciform DNA, conferring on it an open structure. The RuvB hexamer acts as an ATP-dependent pump, pulling dsDNA into and through the RuvAB complex. RuvB forms 2 homohexamers on either side of HJ DNA bound by 1 or 2 RuvA tetramers; 4 subunits per hexamer contact DNA at a time. Coordinated motions by a converter formed by DNA-disengaged RuvB subunits stimulates ATP hydrolysis and nucleotide exchange. Immobilization of the converter enables RuvB to convert the ATP-contained energy into a lever motion, pulling 2 nucleotides of DNA out of the RuvA tetramer per ATP hydrolyzed, thus driving DNA branch migration. The RuvB motors rotate together with the DNA substrate, which together with the progressing nucleotide cycle form the mechanistic basis for DNA recombination by continuous HJ branch migration. Branch migration allows RuvC to scan DNA until it finds its consensus sequence, where it cleaves and resolves cruciform DNA. In Solibacter usitatus (strain Ellin6076), this protein is Holliday junction branch migration complex subunit RuvB.